A 239-amino-acid polypeptide reads, in one-letter code: O-methyltransferase ankF (239 aa).

Residues Glu71, Gly73–Thr74, Ser79, Glu98, and Ala127 each bind S-adenosyl-L-methionine.

This sequence belongs to the class I-like SAM-binding methyltransferase superfamily. Cation-dependent O-methyltransferase family.

It catalyses the reaction NK13650 B + S-adenosyl-L-methionine = NK13650 D + S-adenosyl-L-homocysteine + H(+). Its pathway is secondary metabolite biosynthesis. In terms of biological role, O-methyltransferase; part of the ank cluster that mediates the biosynthesis of NK13650 C, a highly modified cyclo-arginine-tyrosine dipeptide. AnkF converts NK13650 B to produce NK13650 D via methylation of the C-17 phenol group. Within the pathway, the cyclodipeptide synthase ankA acts as the scaffold-generating enzyme and is responsible for formation of the cyclo-Arg-Tyr diketopiperazine (cRY) from L-Arg and L-Tyr. The ankA product cRY is desaturated by the cytochrome P450 monooxygenase ankB to yield a dehydro-cyclodipeptide intermediate. The FAD-dependent monooxygenase ankC then installs the m-OH, ankD catalyzes the attachment of L-homoserine, and ankE ligates citrate to the ankD product to yield NK13650 B. The O-methyltransferase ankF is responsible for methylation of the C-17 phenol group of NK13650 B to produce NK13650 D. Amidation of NK13650 D with L-Asp by ankG then leads to the production of NK13650 C, whereas amidation of NK13650 B produces NK13650 A. In Aspergillus thermomutatus (Neosartorya pseudofischeri), this protein is O-methyltransferase ankF.